The chain runs to 233 residues: MRWLAYLAGCLIVGVVAMQVYFFLQIAAWQVVNPSSTTFMRAERWRLCGFNFWSCPVQRQWVRYDEISRNIKRAVIASEDADFVNHPGYELDAMLDAWERNKQRGRIVRGGSTITQQLAKNLFLSSEQNYLRKGQELAITWMLELWLDKQRIFEIYLNSVEWGEGVFGVEAAAQHYFHTSASKLSVGQAARLAAALPAPKCFDKKQYCANVHVNFRVKASIIARRMGAATLPD.

The helical transmembrane segment at 4 to 24 (LAYLAGCLIVGVVAMQVYFFL) threads the bilayer.

The protein belongs to the glycosyltransferase 51 family.

It localises to the cell inner membrane. It catalyses the reaction [GlcNAc-(1-&gt;4)-Mur2Ac(oyl-L-Ala-gamma-D-Glu-L-Lys-D-Ala-D-Ala)](n)-di-trans,octa-cis-undecaprenyl diphosphate + beta-D-GlcNAc-(1-&gt;4)-Mur2Ac(oyl-L-Ala-gamma-D-Glu-L-Lys-D-Ala-D-Ala)-di-trans,octa-cis-undecaprenyl diphosphate = [GlcNAc-(1-&gt;4)-Mur2Ac(oyl-L-Ala-gamma-D-Glu-L-Lys-D-Ala-D-Ala)](n+1)-di-trans,octa-cis-undecaprenyl diphosphate + di-trans,octa-cis-undecaprenyl diphosphate + H(+). It participates in cell wall biogenesis; peptidoglycan biosynthesis. Its function is as follows. Peptidoglycan polymerase that catalyzes glycan chain elongation from lipid-linked precursors. The protein is Biosynthetic peptidoglycan transglycosylase of Cupriavidus metallidurans (strain ATCC 43123 / DSM 2839 / NBRC 102507 / CH34) (Ralstonia metallidurans).